The sequence spans 567 residues: Dihydroxy-acid dehydratase (567 aa).

Residue Cys57 coordinates [2Fe-2S] cluster. Asp89 is a Mg(2+) binding site. [2Fe-2S] cluster is bound at residue Cys130. Mg(2+) is bound by residues Asp131 and Lys132. Lys132 bears the N6-carboxylysine mark. Cys202 is a [2Fe-2S] cluster binding site. Mg(2+) is bound at residue Glu453. Ser479 acts as the Proton acceptor in catalysis.

Belongs to the IlvD/Edd family. As to quaternary structure, homodimer. The cofactor is [2Fe-2S] cluster. Requires Mg(2+) as cofactor.

The enzyme catalyses (2R)-2,3-dihydroxy-3-methylbutanoate = 3-methyl-2-oxobutanoate + H2O. It carries out the reaction (2R,3R)-2,3-dihydroxy-3-methylpentanoate = (S)-3-methyl-2-oxopentanoate + H2O. Its pathway is amino-acid biosynthesis; L-isoleucine biosynthesis; L-isoleucine from 2-oxobutanoate: step 3/4. It participates in amino-acid biosynthesis; L-valine biosynthesis; L-valine from pyruvate: step 3/4. Functions in the biosynthesis of branched-chain amino acids. Catalyzes the dehydration of (2R,3R)-2,3-dihydroxy-3-methylpentanoate (2,3-dihydroxy-3-methylvalerate) into 2-oxo-3-methylpentanoate (2-oxo-3-methylvalerate) and of (2R)-2,3-dihydroxy-3-methylbutanoate (2,3-dihydroxyisovalerate) into 2-oxo-3-methylbutanoate (2-oxoisovalerate), the penultimate precursor to L-isoleucine and L-valine, respectively. The protein is Dihydroxy-acid dehydratase of Nocardioides sp. (strain ATCC BAA-499 / JS614).